Consider the following 236-residue polypeptide: 2,3,4,5-tetrahydropyridine-2,6-dicarboxylate N-acetyltransferase (236 aa).

This sequence belongs to the transferase hexapeptide repeat family. DapH subfamily.

It catalyses the reaction (S)-2,3,4,5-tetrahydrodipicolinate + acetyl-CoA + H2O = L-2-acetamido-6-oxoheptanedioate + CoA. Its pathway is amino-acid biosynthesis; L-lysine biosynthesis via DAP pathway; LL-2,6-diaminopimelate from (S)-tetrahydrodipicolinate (acetylase route): step 1/3. Functionally, catalyzes the transfer of an acetyl group from acetyl-CoA to tetrahydrodipicolinate. The sequence is that of 2,3,4,5-tetrahydropyridine-2,6-dicarboxylate N-acetyltransferase from Listeria innocua serovar 6a (strain ATCC BAA-680 / CLIP 11262).